A 226-amino-acid polypeptide reads, in one-letter code: MDMQQETIERIIRQVLGQVGPAGGSIATLSGDAGVDPFQVAVGVSNRHIHLSRTDMDTLFGPGAELQRKKAMKQPGQFAAEETVTLKGPKGSLSKVRVLGPLRRETQVEVSVADGFALGITPPLRQSGQLDDTPGLTIIGPQGSVTKDHGVIVAQRHIHMHPSTAAKLGLRNGDEVDVEAGGERGGVMHRVLIRVAEASADEMHIDVEEANALCLKNDDVVRICKK.

Position 44-46 (44-46 (VSN)) interacts with CoA. The Zn(2+) site is built by His48 and His50. Met72, Lys90, and Arg97 together coordinate CoA. Arg103 serves as a coordination point for phosphate. Glu109 is a binding site for Zn(2+). A CoA-binding site is contributed by Phe116. Residues His157, His159, and His204 each coordinate Zn(2+). Asn211 is a CoA binding site.

This sequence belongs to the PduL family. Full-length protein forms large oligomers. Homodimer, when purified in the absence of the encapsulation peptide (EP, residues 1-47). The EP may influence oligomerization. Zn(2+) is required as a cofactor.

It localises to the bacterial microcompartment. It carries out the reaction propanoyl-CoA + phosphate = propanoyl phosphate + CoA. Its pathway is polyol metabolism; 1,2-propanediol degradation. Functionally, involved in 1,2-propanediol (1,2-PD) utilization within the bacterial microcompartment (BMC) dedicated to 1,2-PD degradation by catalyzing the conversion of propanoyl-CoA to propanoyl-phosphate. CoA is regenerated within the pdu BMC (for use by PduP) via this enzyme, although there must also be cofactor transport across the BMC. Directly targeted to the BMC. Phosphate is probably the first substrate to bind in the forward direction. CoA is probably the first substrate to bind in the reverse direction, and might bind to the enzyme as the BMC assembles, ensuring cofactor encapsulation. This Rhodopseudomonas palustris (strain BisB18) protein is Phosphate propanoyltransferase.